A 1666-amino-acid polypeptide reads, in one-letter code: Cortactin-binding protein 2 (1666 aa).

Disordered regions lie at residues 1–25 (MATD…APAE), 202–224 (EKKR…AEME), 366–411 (IVSS…PAIQ), 457–481 (NANN…SPTS), and 501–619 (RFTS…PKPS). A coiled-coil region spans residues 120–274 (KMQERMSTQL…MTEQLKRGND (155 aa)). Low complexity-rich tracts occupy residues 385 to 398 (GPST…PSST) and 457 to 468 (NANNDQDQNGNN). The segment covering 469 to 481 (TQSPPSRDVSPTS) has biased composition (polar residues). The residue at position 501 (Arg501) is an Asymmetric dimethylarginine. 6 ANK repeats span residues 712–742 (GRPT…DINH), 746–775 (DGHS…QVNA), 779–808 (DGFT…NINH), 812–841 (EGQT…DRSV), 845–874 (DGWT…PACG), and 915–945 (EGWT…EPER). Ser1527 carries the phosphoserine modification. The segment covering 1545-1566 (SESDISKIADTRDDLRRFDSSR) has biased composition (basic and acidic residues). 2 disordered regions span residues 1545 to 1601 (SESD…RSNR) and 1620 to 1666 (RSKI…KPNQ). Residues 1585–1594 (KEVSPLSSHQ) are compositionally biased toward polar residues. The span at 1627–1641 (SQNTKRSSSSSNTRQ) shows a compositional bias: low complexity. Residues 1648-1666 (SKDEIWNLRNNEQIEKPNQ) are compositionally biased toward basic and acidic residues.

Interacts with CTTN/cortactin SH3 domain. Interacts with STRN, STRN4/zinedin and MOB4/phocein; this interactions mediate the association with the STRIPAK core complex and may regulate dendritic spine distribution of the STRIPAK complex in hippocampal neurons. Activation of glutamate receptors weakens the interaction with STRN and STRN4.

Its subcellular location is the cytoplasm. It localises to the cell cortex. It is found in the cell projection. The protein resides in the dendritic spine. Its function is as follows. Regulates the dendritic spine distribution of CTTN/cortactin in hippocampal neurons, and thus controls dendritic spinogenesis and dendritic spine maintenance. Associates with the striatin-interacting phosphatase and kinase (STRIPAK) core complex to regulate dendritic spine distribution of the STRIPAK complex in hippocampal neurons. The sequence is that of Cortactin-binding protein 2 (CTTNBP2) from Echinops telfairi (Lesser hedgehog tenrec).